The chain runs to 497 residues: Low affinity K(+) transporter 1 (497 aa).

Over 1–29 (MFNHDWKYSINSKTFADLNIELFRNHKFK) the chain is Extracellular. Residues 30–50 (TVLNYIIGVVGWNGLKLALFV) form a helical membrane-spanning segment. Topologically, residues 51–80 (SDIYTCIKLLAFNSWSNNIIKPYLPFKISK) are cytoplasmic. Residues 81 to 101 (WLFSGCILASIVLLIWEAIAG) form a helical membrane-spanning segment. Residues 102–216 (MRIYKTGNIS…TNHEEAVILS (115 aa)) are Extracellular-facing. Residues 217–237 (LMLFSFIIWALFVFKFLLAVI) traverse the membrane as a helical segment. Residues 238-497 (CSIFVYYKII…EDEDRTYNYT (260 aa)) lie on the Cytoplasmic side of the membrane. Ser-291 and Ser-319 each carry phosphoserine. A disordered region spans residues 420 to 469 (EFHGPLDSMPNTTNNIRNFNSNSSRPRPPPLQTKSSINSKADSNDNGRIY). The span at 429–444 (PNTTNNIRNFNSNSSR) shows a compositional bias: low complexity. Over residues 451–465 (QTKSSINSKADSNDN) the composition is skewed to polar residues.

Belongs to the KCH1 low affinity K(+) transporter family.

The protein resides in the vacuole membrane. It is found in the cell membrane. The enzyme catalyses K(+)(in) = K(+)(out). In terms of biological role, low affinity potassium transporter that, with PRM6/KCH2, participates in high-affinity Ca(2+) influx system (HACS) activation during the response to mating pheromone. Directly promotes K(+) influx and HACS may electrochemically respond to this K(+) influx. KCH1 and KCH2 act at the apex of the calcium signaling pathway that is used for survival during prolonged exposures to mating pheromones. This is Low affinity K(+) transporter 1 from Saccharomyces cerevisiae (strain ATCC 204508 / S288c) (Baker's yeast).